A 133-amino-acid chain; its full sequence is Small ribosomal subunit protein bS6 (133 aa).

The protein belongs to the bacterial ribosomal protein bS6 family.

Its function is as follows. Binds together with bS18 to 16S ribosomal RNA. This is Small ribosomal subunit protein bS6 from Borrelia turicatae (strain 91E135).